A 92-amino-acid polypeptide reads, in one-letter code: Small ribosomal subunit protein uS19 (92 aa).

Belongs to the universal ribosomal protein uS19 family.

Protein S19 forms a complex with S13 that binds strongly to the 16S ribosomal RNA. This is Small ribosomal subunit protein uS19 from Acidovorax sp. (strain JS42).